Reading from the N-terminus, the 238-residue chain is tRNA (guanine-N(7)-)-methyltransferase (238 aa).

S-adenosyl-L-methionine is bound by residues E68, E93, D120, and D143. D143 is a catalytic residue. Residues K147, D179, and 216 to 219 each bind substrate; that span reads TKFE.

Belongs to the class I-like SAM-binding methyltransferase superfamily. TrmB family.

It catalyses the reaction guanosine(46) in tRNA + S-adenosyl-L-methionine = N(7)-methylguanosine(46) in tRNA + S-adenosyl-L-homocysteine. It participates in tRNA modification; N(7)-methylguanine-tRNA biosynthesis. In terms of biological role, catalyzes the formation of N(7)-methylguanine at position 46 (m7G46) in tRNA. In Aliivibrio salmonicida (strain LFI1238) (Vibrio salmonicida (strain LFI1238)), this protein is tRNA (guanine-N(7)-)-methyltransferase.